The following is a 266-amino-acid chain: Small ribosomal subunit protein uS2 (266 aa).

The disordered stretch occupies residues 238–266 (EFASAPDAGKKGRQAQPKKGKRASDAAAE). The segment covering 248–258 (KGRQAQPKKGK) has biased composition (basic residues).

Belongs to the universal ribosomal protein uS2 family.

This Xylella fastidiosa (strain M12) protein is Small ribosomal subunit protein uS2.